Consider the following 314-residue polypeptide: MSAYLHCLSHTPLVGYVDPVAEVLAEVDEVVAAARARIAAFDPQLVFLFAPDHYNGFFYDVMPSFCIGMAATAIGDFHSLAGPLDVPRETAEACAAAVLEAGVDAAVSYRMQVDHGFAQPLELLLGGLAEKPVVPVFINGVAVPLPGFQRARLLGEAIGRFARSTGKRVLFLGSGGLSHQPPVPELAKVDARMADRLLGSGRDLPTDERQARQQRVISAAEGFVADQNSLHPLNPEWDNHFLDLLEQRRFAELDGLGNAELSALAGKSTHEVKTWVTAFAALSAFGPYQAHERYYRPIPEWIAGFGSLSAHSLS.

The active-site Proton donor is His-115. Catalysis depends on His-179, which acts as the Proton acceptor.

It belongs to the LigB/MhpB extradiol dioxygenase family. As to quaternary structure, homotetramer. Fe(2+) is required as a cofactor.

The enzyme catalyses 3-(2,3-dihydroxyphenyl)propanoate + O2 = (2Z,4E)-2-hydroxy-6-oxonona-2,4-dienedioate + H(+). The catalysed reaction is (2E)-3-(2,3-dihydroxyphenyl)prop-2-enoate + O2 = (2Z,4E,7E)-2-hydroxy-6-oxonona-2,4,7-trienedioate + H(+). The protein operates within aromatic compound metabolism; 3-phenylpropanoate degradation. Functionally, catalyzes the non-heme iron(II)-dependent oxidative cleavage of 2,3-dihydroxyphenylpropionic acid and 2,3-dihydroxicinnamic acid into 2-hydroxy-6-ketononadienedioate and 2-hydroxy-6-ketononatrienedioate, respectively. This chain is 2,3-dihydroxyphenylpropionate/2,3-dihydroxicinnamic acid 1,2-dioxygenase 1, found in Pseudomonas putida (Arthrobacter siderocapsulatus).